The chain runs to 187 residues: Large ribosomal subunit protein bL17 (187 aa).

Belongs to the bacterial ribosomal protein bL17 family. As to quaternary structure, part of the 50S ribosomal subunit. Contacts protein L32.

The sequence is that of Large ribosomal subunit protein bL17 from Rhodococcus opacus (strain B4).